We begin with the raw amino-acid sequence, 394 residues long: Quinolinate synthase (394 aa).

Residues histidine 57 and serine 74 each coordinate iminosuccinate. [4Fe-4S] cluster is bound at residue cysteine 121. Residues 153–155 (YMN) and serine 174 contribute to the iminosuccinate site. Residue cysteine 243 coordinates [4Fe-4S] cluster. Iminosuccinate is bound by residues 269–271 (HPE) and threonine 286. [4Fe-4S] cluster is bound at residue cysteine 333.

The protein belongs to the quinolinate synthase family. Type 3 subfamily. [4Fe-4S] cluster serves as cofactor.

The protein resides in the cytoplasm. It catalyses the reaction iminosuccinate + dihydroxyacetone phosphate = quinolinate + phosphate + 2 H2O + H(+). Its pathway is cofactor biosynthesis; NAD(+) biosynthesis; quinolinate from iminoaspartate: step 1/1. In terms of biological role, catalyzes the condensation of iminoaspartate with dihydroxyacetone phosphate to form quinolinate. This is Quinolinate synthase from Corynebacterium glutamicum (strain ATCC 13032 / DSM 20300 / JCM 1318 / BCRC 11384 / CCUG 27702 / LMG 3730 / NBRC 12168 / NCIMB 10025 / NRRL B-2784 / 534).